Consider the following 525-residue polypeptide: GMP synthase [glutamine-hydrolyzing] (525 aa).

Positions lysine 8–asparagine 207 constitute a Glutamine amidotransferase type-1 domain. Cysteine 85 serves as the catalytic Nucleophile. Active-site residues include histidine 181 and glutamate 183. One can recognise a GMPS ATP-PPase domain in the interval tryptophan 208 to arginine 400. An ATP-binding site is contributed by serine 235–serine 241.

As to quaternary structure, homodimer.

The catalysed reaction is XMP + L-glutamine + ATP + H2O = GMP + L-glutamate + AMP + diphosphate + 2 H(+). The protein operates within purine metabolism; GMP biosynthesis; GMP from XMP (L-Gln route): step 1/1. In terms of biological role, catalyzes the synthesis of GMP from XMP. The polypeptide is GMP synthase [glutamine-hydrolyzing] (Shewanella piezotolerans (strain WP3 / JCM 13877)).